We begin with the raw amino-acid sequence, 536 residues long: Major facilitator superfamily domain-containing protein 4B (536 aa).

Transmembrane regions (helical) follow at residues 19–39 (LTYW…GPTI), 53–73 (ITWV…SGGA), 81–101 (ALLA…IIPL), 105–125 (VLLL…IDTI), 140–160 (IFLQ…PLIA), 211–231 (YAFW…FVLM), 297–317 (FFLI…IMGV), 341–361 (LNCI…PLSY), 366–386 (VHLL…LMIL), 391–411 (VFLF…FPCL), 428–448 (VLVT…GTLI), and 456–476 (FLVC…SVIL).

It belongs to the major facilitator superfamily.

The protein localises to the membrane. The sequence is that of Major facilitator superfamily domain-containing protein 4B from Danio rerio (Zebrafish).